The following is a 290-amino-acid chain: Acetyl-coenzyme A carboxylase carboxyl transferase subunit beta (290 aa).

One can recognise a CoA carboxyltransferase N-terminal domain in the interval 27 to 290 (LWVKCPSCEA…LQRQPADALA (264 aa)). Zn(2+) contacts are provided by Cys31, Cys34, Cys50, and Cys53. The segment at 31 to 53 (CPSCEAVLYRNDVDANLHVCPKC) adopts a C4-type zinc-finger fold.

The protein belongs to the AccD/PCCB family. Acetyl-CoA carboxylase is a heterohexamer composed of biotin carboxyl carrier protein (AccB), biotin carboxylase (AccC) and two subunits each of ACCase subunit alpha (AccA) and ACCase subunit beta (AccD). Zn(2+) is required as a cofactor.

The protein localises to the cytoplasm. The enzyme catalyses N(6)-carboxybiotinyl-L-lysyl-[protein] + acetyl-CoA = N(6)-biotinyl-L-lysyl-[protein] + malonyl-CoA. It participates in lipid metabolism; malonyl-CoA biosynthesis; malonyl-CoA from acetyl-CoA: step 1/1. Component of the acetyl coenzyme A carboxylase (ACC) complex. Biotin carboxylase (BC) catalyzes the carboxylation of biotin on its carrier protein (BCCP) and then the CO(2) group is transferred by the transcarboxylase to acetyl-CoA to form malonyl-CoA. The protein is Acetyl-coenzyme A carboxylase carboxyl transferase subunit beta of Burkholderia cenocepacia (strain ATCC BAA-245 / DSM 16553 / LMG 16656 / NCTC 13227 / J2315 / CF5610) (Burkholderia cepacia (strain J2315)).